The chain runs to 63 residues: Large ribosomal subunit protein bL28 (63 aa).

The protein belongs to the bacterial ribosomal protein bL28 family.

The protein is Large ribosomal subunit protein bL28 of Geobacter metallireducens (strain ATCC 53774 / DSM 7210 / GS-15).